The following is a 148-amino-acid chain: uncharacterized protein (148 aa).

2 consecutive CBS domains span residues 8–68 and 74–130; these read MTAD…PNSQ and MTEK…ERAG. A disordered region spans residues 127 to 148; the sequence is ERAGSALSDISEGDNREEGFFH. The span at 139–148 shows a compositional bias: basic and acidic residues; sequence GDNREEGFFH.

This is an uncharacterized protein from Bacillus subtilis (strain 168).